The following is a 35-amino-acid chain: Probable L,D-transpeptidase ErfK/SrfK (35 aa).

The N-terminal stretch at 1 to 21 is a signal peptide; sequence MRRVKLLCTALMLLASHGALA.

Belongs to the YkuD family.

It is found in the periplasm. Its pathway is cell wall biogenesis; peptidoglycan biosynthesis. The protein is Probable L,D-transpeptidase ErfK/SrfK (erfK) of Klebsiella aerogenes (Enterobacter aerogenes).